The primary structure comprises 88 residues: Small ribosomal subunit protein bS16 (88 aa).

It belongs to the bacterial ribosomal protein bS16 family.

This is Small ribosomal subunit protein bS16 from Mesomycoplasma hyopneumoniae (strain 232) (Mycoplasma hyopneumoniae).